A 114-amino-acid chain; its full sequence is Iron-sulfur cluster insertion protein ErpA (114 aa).

Iron-sulfur cluster contacts are provided by cysteine 42, cysteine 106, and cysteine 108.

This sequence belongs to the HesB/IscA family. As to quaternary structure, homodimer. The cofactor is iron-sulfur cluster.

Functionally, required for insertion of 4Fe-4S clusters for at least IspG. In Pasteurella multocida (strain Pm70), this protein is Iron-sulfur cluster insertion protein ErpA.